The following is a 256-amino-acid chain: uncharacterized protein (256 aa).

7 consecutive transmembrane segments (helical) span residues 32–52 (ILASIFIGFGITAASKTGSYF), 59–79 (FAFPAAAVTFGAAILMIAYGG), 112–132 (YAGNLIGAILFAILISATGLF), 156–176 (LFFRGMLCNWLVCLAFFIPMS), 184–204 (LFTMMLFVFCFFISGFEHSIA), 207–227 (CTFAISLLIEHPDTVTLMGAV), and 230–250 (LIPVTLGNLTAGIVMMGWMYY).

The protein belongs to the FNT transporter (TC 1.A.16) family.

The protein localises to the cell membrane. This is an uncharacterized protein from Bacillus subtilis (strain 168).